The following is a 314-amino-acid chain: MGRVLLSASSLLLHIQVFTRRLGNEYIEQDRPPCGTSGHPGSIRPTEMKTMTFGLNDEERAKHPRESEVLNENGAARFQQRYTHMGQKMYTCVALTVVALVSTMHFGVEAWGGLFNRFSPEMLSNLGYGSHGDHISKSGLYQRPLSTSYGYSYDSLEEVIPCYERKCTLNEHCCPGSICMNVDGDVGHCVFELGQKQGELCRNDNDCETGLMCAEVAGSETRSCQVPITSNKLYNEECNVSGECDISRGLCCQLQRRHRQTPRKVCSYFKDPLVCIGPVATDQIKSIVQYTSGEKRITGQGNRIFKRSLKAPFA.

A signal peptide spans 1-19; it reads MGRVLLSASSLLLHIQVFT. A helical membrane pass occupies residues 90-112; that stretch reads YTCVALTVVALVSTMHFGVEAWG.

Its subcellular location is the membrane. The protein is Prohormone-3 of Apis mellifera (Honeybee).